Consider the following 232-residue polypeptide: MAREGKRIRAAREGLEPTKLYAIDEAIKLVKSKASAKFDETVEISMNLGVDPRHADQMVRGVCNLPNGSGRTVRVAVFARGAKADDAKAAGADIVGAEDLLEIVQGGKIEFDRCIATPDLMPLVGRLGKVLGPRGLMPNPKVGTVTMDVKGAVAAAKGGAVEFRVEKAGIIHAGVGKVSFDEQKLVENIKAFADAVAKAKPAGAKGTYIQRIAVTSTMGPGVKVEPSTVLTA.

Belongs to the universal ribosomal protein uL1 family. As to quaternary structure, part of the 50S ribosomal subunit.

Functionally, binds directly to 23S rRNA. The L1 stalk is quite mobile in the ribosome, and is involved in E site tRNA release. In terms of biological role, protein L1 is also a translational repressor protein, it controls the translation of the L11 operon by binding to its mRNA. This Methylorubrum populi (strain ATCC BAA-705 / NCIMB 13946 / BJ001) (Methylobacterium populi) protein is Large ribosomal subunit protein uL1.